A 204-amino-acid chain; its full sequence is Inactive ribonuclease-like protein 9 (204 aa).

Residues 1–26 (MMRTLITIHPLPLLLLLQQLLQPVQF) form the signal peptide. 3 disulfides stabilise this stretch: C97-C152, C115-C167, and C122-C129. N130 and N142 each carry an N-linked (GlcNAc...) asparagine glycan.

Belongs to the pancreatic ribonuclease family.

The protein localises to the secreted. Does not exhibit any ribonuclease activity. The sequence is that of Inactive ribonuclease-like protein 9 (RNASE9) from Symphalangus syndactylus (Siamang).